The primary structure comprises 313 residues: Ribosomal RNA small subunit methyltransferase H (313 aa).

Residues 35 to 37 (GGH), Asp-55, Phe-80, Asp-102, and Gln-109 each bind S-adenosyl-L-methionine.

It belongs to the methyltransferase superfamily. RsmH family.

It is found in the cytoplasm. The enzyme catalyses cytidine(1402) in 16S rRNA + S-adenosyl-L-methionine = N(4)-methylcytidine(1402) in 16S rRNA + S-adenosyl-L-homocysteine + H(+). Functionally, specifically methylates the N4 position of cytidine in position 1402 (C1402) of 16S rRNA. The chain is Ribosomal RNA small subunit methyltransferase H from Shewanella sp. (strain MR-7).